The following is a 165-amino-acid chain: Coronafacic acid dehydratase (165 aa).

Histidine 62 is an active-site residue.

It belongs to the thioester dehydratase family.

It functions in the pathway phytotoxin biosynthesis; coronatine biosynthesis. This chain is Coronafacic acid dehydratase (cfa2), found in Pseudomonas savastanoi pv. glycinea (Pseudomonas syringae pv. glycinea).